We begin with the raw amino-acid sequence, 276 residues long: Formamidopyrimidine-DNA glycosylase (276 aa).

The Schiff-base intermediate with DNA role is filled by P2. The Proton donor role is filled by E3. The Proton donor; for beta-elimination activity role is filled by K58. DNA-binding residues include H92, R111, and R154. An FPG-type zinc finger spans residues 239 to 273; that stretch reads HAYQRTGDPCERCGTPIQRIVVGQRGTHFCPKCQV. R263 serves as the catalytic Proton donor; for delta-elimination activity.

This sequence belongs to the FPG family. Monomer. It depends on Zn(2+) as a cofactor.

It carries out the reaction Hydrolysis of DNA containing ring-opened 7-methylguanine residues, releasing 2,6-diamino-4-hydroxy-5-(N-methyl)formamidopyrimidine.. It catalyses the reaction 2'-deoxyribonucleotide-(2'-deoxyribose 5'-phosphate)-2'-deoxyribonucleotide-DNA = a 3'-end 2'-deoxyribonucleotide-(2,3-dehydro-2,3-deoxyribose 5'-phosphate)-DNA + a 5'-end 5'-phospho-2'-deoxyribonucleoside-DNA + H(+). Its function is as follows. Involved in base excision repair of DNA damaged by oxidation or by mutagenic agents. Acts as a DNA glycosylase that recognizes and removes damaged bases. Has a preference for oxidized purines, such as 7,8-dihydro-8-oxoguanine (8-oxoG). Has AP (apurinic/apyrimidinic) lyase activity and introduces nicks in the DNA strand. Cleaves the DNA backbone by beta-delta elimination to generate a single-strand break at the site of the removed base with both 3'- and 5'-phosphates. In Ligilactobacillus salivarius (strain UCC118) (Lactobacillus salivarius), this protein is Formamidopyrimidine-DNA glycosylase.